Consider the following 284-residue polypeptide: Four and a half LIM domains protein 5 (284 aa).

The C4-type zinc-finger motif lies at 8-32 (CQYCMASLLGKKYVLKDDNPYCVSC). LIM zinc-binding domains are found at residues 39 to 100 (NYCE…ECSS), 101 to 160 (KCFH…KEFA), 161 to 220 (HYCS…LYAK), and 223 to 283 (AACT…VDTD).

As to quaternary structure, interacts with CREM (via the third LIM domain). Interacts (via second LIM domain) with SPAG8.

It localises to the nucleus. Functionally, may be involved in the regulation of spermatogenesis. Stimulates CREM transcriptional activity in a phosphorylation-independent manner. In Bos taurus (Bovine), this protein is Four and a half LIM domains protein 5 (FHL5).